Here is a 360-residue protein sequence, read N- to C-terminus: Phosphate acyltransferase (360 aa).

This sequence belongs to the PlsX family. Homodimer. Probably interacts with PlsY.

The protein localises to the cytoplasm. The catalysed reaction is a fatty acyl-[ACP] + phosphate = an acyl phosphate + holo-[ACP]. It participates in lipid metabolism; phospholipid metabolism. In terms of biological role, catalyzes the reversible formation of acyl-phosphate (acyl-PO(4)) from acyl-[acyl-carrier-protein] (acyl-ACP). This enzyme utilizes acyl-ACP as fatty acyl donor, but not acyl-CoA. The protein is Phosphate acyltransferase of Thermobifida fusca (strain YX).